Consider the following 147-residue polypeptide: uncharacterized protein (147 aa).

This is an uncharacterized protein from Mycolicibacterium smegmatis (Mycobacterium smegmatis).